Here is a 551-residue protein sequence, read N- to C-terminus: Colicin-E6 (551 aa).

Disordered stretches follow at residues 1 to 74, 244 to 269, 293 to 317, 406 to 501, and 517 to 551; these read MSGG…SGGG, LSPG…NTRD, PDQV…HPVE, NKQA…WYGD, and EGYR…KKYL. A compositionally biased stretch (gly residues) spans 20–35; it reads INGGPTGLGVGGGASD. The span at 36-45 shows a compositional bias: low complexity; it reads GSGWSSENNP. Gly residues predominate over residues 46 to 74; the sequence is WGGGSGSGIHWGGGSGHGNGGGNGNSGGG. Basic and acidic residues-rich tracts occupy residues 296–317 and 430–484; these read VKQR…HPVE and ESRK…EGKP. The interval 455–551 is ribosome inactivating activity; that stretch reads KGVKDYGHDY…DPKRNIKKYL (97 aa). The tract at residues 530–551 is binding of immunity protein; that stretch reads FEPKTGNQLKGPDPKRNIKKYL.

This sequence belongs to the cloacin colicin family.

Functionally, inactivates ribosomes by hydrolyzing 16S RNA in 30S ribosomes at a specific site. Its function is as follows. Colicins are polypeptide toxins produced by and active against E.coli and closely related bacteria. This Escherichia coli protein is Colicin-E6.